Consider the following 143-residue polypeptide: MSRSGVAVADESLTAFNDLKLGKKYKFILFGLNDAKTEIVVKETSTDPSYDAFLEKLPENDCLYAIYDFEYEINGNEGKRSKIVFFTWSPDTAPVRSKMVYASSKDALRRALNGVSTDVQGTDFSEVSYDSVLERVSRGAGSH.

Ser4 is subject to Phosphoserine. One can recognise an ADF-H domain in the interval 5-137 (GVAVADESLT…SYDSVLERVS (133 aa)).

This sequence belongs to the actin-binding proteins ADF family. In terms of assembly, interacts with actin and AIP1 in a ternary complex. Post-translationally, the N-terminus is blocked.

It is found in the cytoplasm. Its subcellular location is the cytoskeleton. It localises to the nucleus matrix. In terms of biological role, controls reversibly actin polymerization and depolymerization in a pH-sensitive manner. It has the ability to bind G- and F-actin in a 1:1 ratio of cofilin to actin. Binding to F-actin is regulated by tropomyosin. It is the major component of intranuclear and cytoplasmic actin rods. Required for accumulation of actin at the cell division site via depolymerizing actin at the cell ends. In association with myosin II has a role in the assembly of the contractile ring via severing actin filaments. Involved in the maintenance of the contractile ring once formed. In association with profilin and capping protein, has a role in the mitotic reorganization of the actin cytoskeleton. In effect, yeast cofilin increases the rate of actin polymerization by making new ends available for actin subunit addition. Such a protein complex is important for the polarized growth of yeast cells. The polypeptide is Cofilin (COF1) (Saccharomyces cerevisiae (strain ATCC 204508 / S288c) (Baker's yeast)).